An 86-amino-acid chain; its full sequence is UPF0213 protein OB0043 (86 aa).

Residues 3–80 (EQHYVYILRC…LPRFEKLKLI (78 aa)) enclose the GIY-YIG domain.

This sequence belongs to the UPF0213 family.

This chain is UPF0213 protein OB0043, found in Oceanobacillus iheyensis (strain DSM 14371 / CIP 107618 / JCM 11309 / KCTC 3954 / HTE831).